Reading from the N-terminus, the 299-residue chain is Ribosomal protein L11 methyltransferase (299 aa).

Residues Thr140, Gly161, Asp183, and Asn232 each contribute to the S-adenosyl-L-methionine site.

This sequence belongs to the methyltransferase superfamily. PrmA family.

Its subcellular location is the cytoplasm. It catalyses the reaction L-lysyl-[protein] + 3 S-adenosyl-L-methionine = N(6),N(6),N(6)-trimethyl-L-lysyl-[protein] + 3 S-adenosyl-L-homocysteine + 3 H(+). Its function is as follows. Methylates ribosomal protein L11. This Synechococcus elongatus (strain ATCC 33912 / PCC 7942 / FACHB-805) (Anacystis nidulans R2) protein is Ribosomal protein L11 methyltransferase.